The following is a 189-amino-acid chain: Ribosome maturation factor RimP (189 aa).

This sequence belongs to the RimP family.

It is found in the cytoplasm. Required for maturation of 30S ribosomal subunits. The chain is Ribosome maturation factor RimP from Mycobacteroides abscessus (strain ATCC 19977 / DSM 44196 / CCUG 20993 / CIP 104536 / JCM 13569 / NCTC 13031 / TMC 1543 / L948) (Mycobacterium abscessus).